A 97-amino-acid chain; its full sequence is Peptide Y (97 aa).

The signal sequence occupies residues 1–28 (MANMLRSWMMLAALAVCLLVCLSSFADA). Tyr-64 bears the Tyrosine amide mark. Positions 68 to 97 (STPEQAVAWLLFGADSSQDAEPRLDYSDQW) are cleaved as a propeptide — C-terminal extension.

It belongs to the NPY family.

The protein resides in the secreted. The sequence is that of Peptide Y from Dicentrarchus labrax (European seabass).